Reading from the N-terminus, the 306-residue chain is MTTIIDGKAVAASINGAIKDANAELQEQTGRKTGLSVIIVGDDPASHAYVGAKSRMAKECGFFSVQHTLPKETTQQELAGLVHQLNADDGIHGILVQLPLPEHLDADAIIQSIRPEKDVDGLHVANAGKLATGDLESGLISCTPAGAMVFVRRVHGRDLSGLNALVIGRSNLFGKPMAQLLLNANATVTIAHSRTSDLASICRNADIVIAAVGRPEMVKANWLKTGATVIDVGINRVPAPEKGENRTRLVGDVAFAECAPFASAITPVPGGVGPMTIAMLMANSVIAAHRASGLKVSERLSKLISG.

Residues 168–170, S193, and I234 contribute to the NADP(+) site; that span reads GRS.

It belongs to the tetrahydrofolate dehydrogenase/cyclohydrolase family. As to quaternary structure, homodimer.

The enzyme catalyses (6R)-5,10-methylene-5,6,7,8-tetrahydrofolate + NADP(+) = (6R)-5,10-methenyltetrahydrofolate + NADPH. It catalyses the reaction (6R)-5,10-methenyltetrahydrofolate + H2O = (6R)-10-formyltetrahydrofolate + H(+). It functions in the pathway one-carbon metabolism; tetrahydrofolate interconversion. Functionally, catalyzes the oxidation of 5,10-methylenetetrahydrofolate to 5,10-methenyltetrahydrofolate and then the hydrolysis of 5,10-methenyltetrahydrofolate to 10-formyltetrahydrofolate. The protein is Bifunctional protein FolD 1 of Rhizobium meliloti (strain 1021) (Ensifer meliloti).